Consider the following 2907-residue polypeptide: Fibrillin-2 (2907 aa).

The first 28 residues, 1 to 28 (MGRRRRLCLQPYFVWLGCVALWAQGTDG), serve as a signal peptide directing secretion. Residues 26-58 (TDGQPQPPPPKTLRPQPPPQQVRPAVAGSEGGF) are disordered. Residues 29–77 (QPQPPPPKTLRPQPPPQQVRPAVAGSEGGFMGPEYRDEGAVAASRVRRR) constitute a propeptide that is removed on maturation. Positions 30–46 (PQPPPPKTLRPQPPPQQ) are enriched in pro residues. 3 EGF-like domains span residues 111-142 (IVPI…PTCG), 145-176 (SIQQ…TYCG), and 176-208 (GQPV…PQCE). Intrachain disulfides connect Cys115-Cys124, Cys119-Cys130, Cys132-Cys141, Cys149-Cys159, Cys153-Cys164, Cys166-Cys175, Cys180-Cys190, Cys184-Cys196, and Cys198-Cys207. The interaction with MFAP4 stretch occupies residues 149–359 (CSVRCMNGGT…VTSTDGSRCI (211 aa)). The region spanning 214-266 (GPCFTQVNNQMCQGQLTGIVCTKTLCCATIGRAWGHPCEMCPAQPQPCRRGFI) is the TB 1 domain. The EGF-like 4; calcium-binding domain occupies 276–317 (DVDECQAIPGLCQGGNCINTVGSFECRCPAGHKQSETTQKCE). 6 disulfide bridges follow: Cys280–Cys292, Cys287–Cys301, Cys303–Cys316, Cys322–Cys334, Cys329–Cys343, and Cys345–Cys358. Ser298 carries an O-linked (Glc) serine glycan. In terms of domain architecture, EGF-like 5; calcium-binding spans 318-359 (DIDECSVIPGVCETGDCSNTVGSYFCLCPRGFVTSTDGSRCI). O-linked (Glc) serine glycosylation occurs at Ser340. The TB 2 domain maps to 364–417 (GTCFSGLVNGRCAQELPGRMAKAQCCCEPGRCWSIGTIPEACPVRGSEEYRRLC). The N-linked (GlcNAc...) asparagine glycan is linked to Asn485. One can recognise an EGF-like 6 domain in the interval 487–527 (TIDICKHHANLCLNGRCIPTVSSYRCECNMGYKQDANGDCI). 15 cysteine pairs are disulfide-bonded: Cys491–Cys503, Cys498–Cys512, Cys514–Cys526, Cys532–Cys542, Cys537–Cys551, Cys553–Cys566, Cys572–Cys584, Cys579–Cys593, Cys595–Cys608, Cys614–Cys625, Cys620–Cys634, Cys636–Cys649, Cys655–Cys666, Cys661–Cys675, and Cys677–Cys690. O-linked (Glc) serine glycosylation occurs at Ser509. The region spanning 528 to 567 (DVDECTSNPCSNGDCVNTPGSYYCKCHAGFQRTPTKQACI) is the EGF-like 7; calcium-binding domain. Residue Ser548 is glycosylated (O-linked (Glc) serine). The EGF-like 8; calcium-binding domain maps to 568–609 (DIDECIQNGVLCKNGRCVNTDGSFQCICNAGFELTTDGKNCV). Ser590 carries O-linked (Glc) serine glycosylation. An EGF-like 9; calcium-binding domain is found at 610 to 650 (DHDECTTTNMCLNGMCINEDGSFKCVCKPGFILAPNGRYCT). Ser631 carries an O-linked (Glc) serine glycan. In terms of domain architecture, EGF-like 10; calcium-binding spans 651–691 (DVDECQTPGICMNGHCINNEGSFRCDCPPGLAVGVDGRVCV). The O-linked (Glc) serine glycan is linked to Ser672. The 53-residue stretch at 697-749 (STCYGEIKKGVCVRPFPGAVTKSECCCANPDYGFGEPCQPCPAKNSAEFHGLC) folds into the TB 3 domain. An EGF-like 11; calcium-binding domain is found at 761 to 802 (DINECALDPDICANGICENLRGSYRCNCNSGYEPDASGRNCI). 9 disulfide bridges follow: Cys765–Cys777, Cys772–Cys786, Cys788–Cys801, Cys807–Cys819, Cys814–Cys828, Cys830–Cys843, Cys849–Cys859, Cys854–Cys868, and Cys870–Cys883. The 42-residue stretch at 803-844 (DIDECLVNRLLCDNGLCRNTPGSYSCTCPPGYVFRTETETCE) folds into the EGF-like 12; calcium-binding domain. An O-linked (Glc) serine glycan is attached at Ser825. The region spanning 845–883 (DVNECESNPCVNGACRNNLGSFHCECSPGSKLSSTGLIC) is the EGF-like 13; calcium-binding domain. An O-linked (Glc) serine glycan is attached at Ser865. The TB 4 domain occupies 889–940 (GTCWLNIQDNRCEVNINGATLKSECCATLGAAWGSPCERCELDAACPRGFAR). One can recognise an EGF-like 14; calcium-binding domain in the interval 948–989 (DVNECEVFPGVCPNGRCVNSKGSFHCECPEGLTLDGTGRVCL). 3 disulfide bridges follow: Cys952/Cys964, Cys959/Cys973, and Cys975/Cys988. An O-linked (Glc) serine glycan is attached at Ser970. The TB 5 domain occupies 994 to 1045 (EHCFLKWDEDECIHPVPGKFRMDACCCAVGAAWGTECEECPKPGTKEYETLC). The region spanning 1066-1107 (DINECKAFPGMCTYGKCRNTIGSFKCRCNNGFALDMEERNCT) is the EGF-like 15; calcium-binding domain. Intrachain disulfides connect Cys1070–Cys1082, Cys1077–Cys1091, Cys1093–Cys1106, Cys1112–Cys1124, Cys1119–Cys1133, Cys1135–Cys1149, Cys1155–Cys1167, Cys1162–Cys1176, Cys1178–Cys1191, Cys1197–Cys1209, Cys1204–Cys1218, Cys1220–Cys1233, Cys1239–Cys1250, Cys1246–Cys1259, Cys1261–Cys1274, Cys1280–Cys1292, Cys1287–Cys1301, Cys1303–Cys1316, Cys1322–Cys1334, Cys1329–Cys1343, Cys1345–Cys1358, Cys1364–Cys1377, Cys1371–Cys1386, Cys1388–Cys1399, Cys1405–Cys1418, Cys1412–Cys1427, Cys1429–Cys1440, Cys1446–Cys1458, Cys1453–Cys1467, Cys1469–Cys1482, Cys1488–Cys1499, Cys1494–Cys1508, Cys1510–Cys1523, Cys1529–Cys1540, Cys1535–Cys1549, and Cys1551–Cys1564. The O-linked (Glc) serine glycan is linked to Ser1088. An N-linked (GlcNAc...) asparagine glycan is attached at Asn1105. Positions 1108-1150 (DIDECRISPDLCGSGICVNTPGSFECECFEGYESGFMMMKNCM) constitute an EGF-like 16; calcium-binding domain. One can recognise an EGF-like 17; calcium-binding domain in the interval 1151 to 1192 (DIDECERNPLLCRGGTCVNTEGSFQCDCPLGHELSPSREDCV). Ser1173 is a glycosylation site (O-linked (Glc) serine). The 42-residue stretch at 1193-1234 (DINECSLSDNLCRNGKCVNMIGTYQCSCNPGYQATPDRQGCT) folds into the EGF-like 18; calcium-binding domain. Thr1215 carries an O-linked (Glc) threonine glycan. Residues 1235–1275 (DIDECMIMNGGCDTQCTNSEGSYECSCSEGYALMPDGRSCA) enclose the EGF-like 19; calcium-binding domain. An O-linked (Glc) serine glycan is attached at Ser1256. An EGF-like 20; calcium-binding domain is found at 1276-1317 (DIDECENNPDICDGGQCTNIPGEYRCLCYDGFMASMDMKTCI). An EGF-like 21; calcium-binding domain is found at 1318–1359 (DVNECDLNPNICMFGECENTKGSFICHCQLGYSVKKGTTGCT). Ser1340 carries O-linked (Glc) serine glycosylation. An EGF-like 22; calcium-binding domain is found at 1360–1400 (DVDECEIGAHNCDMHASCLNVPGSFKCSCREGWVGNGIKCI). The O-linked (Glc) serine glycan is linked to Ser1383. Residues 1401 to 1441 (DLDECANGTHQCSINAQCVNTPGSYRCACSEGFTGDGFTCS) enclose the EGF-like 23; calcium-binding domain. N-linked (GlcNAc...) asparagine glycosylation is present at Asn1407. The 42-residue stretch at 1442–1483 (DVDECAENTNLCENGQCLNVPGAYRCECEMGFTPASDSRSCQ) folds into the EGF-like 24; calcium-binding domain. The EGF-like 25; calcium-binding domain occupies 1484–1524 (DIDECSFQNICVFGTCNNLPGMFHCICDDGYELDRTGGNCT). Asn1522 carries N-linked (GlcNAc...) asparagine glycosylation. An EGF-like 26; calcium-binding domain is found at 1525–1565 (DIDECADPINCVNGLCVNTPGRYECNCPPDFQLNPTGVGCV). The 57-residue stretch at 1570 to 1626 (GNCYLKFGPRGDGSLSCNTEVGVGVSRSSCCCSLGKAWGNPCETCPPVNSTEYYTLC) folds into the TB 6 domain. Residue Asn1618 is glycosylated (N-linked (GlcNAc...) asparagine). An EGF-like 27; calcium-binding domain is found at 1643 to 1684 (DIDECQELPGLCQGGNCINTFGSFQCECPQGYYLSEETRICE). 6 cysteine pairs are disulfide-bonded: Cys1647-Cys1659, Cys1654-Cys1668, Cys1670-Cys1683, Cys1689-Cys1701, Cys1696-Cys1710, and Cys1712-Cys1725. O-linked (Glc) serine glycosylation occurs at Ser1665. In terms of domain architecture, EGF-like 28; calcium-binding spans 1685 to 1726 (DIDECFAHPGVCGPGTCYNTLGNYTCICPPEYMQVNGGHNCM). N-linked (GlcNAc...) asparagine glycosylation occurs at Asn1707. The tract at residues 1728–2164 (MRKSFCYRSY…VPSLHDTRED (437 aa)) is interaction with MFAP4. The TB 7 domain occupies 1731–1784 (SFCYRSYNGTTCENELPFNVTKRMCCCTYNVGKAWNKPCEPCPTPGTADFKTIC). Residues Asn1738 and Asn1749 are each glycosylated (N-linked (GlcNAc...) asparagine). An EGF-like 29; calcium-binding domain is found at 1801 to 1842 (DIDECKEIPGICANGVCINQIGSFRCECPTGFSYNDLLLVCE). 21 cysteine pairs are disulfide-bonded: Cys1805-Cys1817, Cys1812-Cys1826, Cys1828-Cys1841, Cys1847-Cys1860, Cys1854-Cys1869, Cys1871-Cys1883, Cys1889-Cys1901, Cys1896-Cys1910, Cys1912-Cys1925, Cys1931-Cys1941, Cys1936-Cys1950, Cys1952-Cys1964, Cys1970-Cys1983, Cys1978-Cys1992, Cys1994-Cys2007, Cys2013-Cys2025, Cys2020-Cys2034, Cys2036-Cys2047, Cys2053-Cys2065, Cys2060-Cys2074, and Cys2076-Cys2089. One can recognise an EGF-like 30; calcium-binding domain in the interval 1843–1884 (DIDECSNGDNLCQRNADCINSPGSYRCECAAGFKLSPNGACV). Ser1866 is a glycosylation site (O-linked (Glc) serine). One can recognise an EGF-like 31; calcium-binding domain in the interval 1885-1926 (DRNECLEIPNVCSHGLCVDLQGSYQCICNNGFKASQDQTMCM). The EGF-like 32; calcium-binding domain occupies 1927–1965 (DVDECERHPCGNGTCKNTVGSYNCLCYPGFELTHNNDCL). N-linked (GlcNAc...) asparagine glycosylation occurs at Asn1938. The O-linked (Glc) serine glycan is linked to Ser1947. An EGF-like 33; calcium-binding domain is found at 1966-2008 (DIDECSSFFGQVCRNGRCFNEIGSFKCLCNEGYELTPDGKNCI). Ser1989 carries an O-linked (Glc) serine glycan. The region spanning 2009–2048 (DTNECVALPGSCSPGTCQNLEGSFRCICPPGYEVRSENCI) is the EGF-like 34; calcium-binding domain. The EGF-like 35; calcium-binding domain occupies 2049–2090 (DINECDEDPNICLFGSCTNTPGGFQCICPPGFVLSDNGRRCF). The 54-residue stretch at 2095 to 2148 (SFCFTNFENGKCSVPKAFNTTKAKCCCSKMPGEGWGDPCELCPKDDEVAFQDLC) folds into the TB 8 domain. Asn2113 carries N-linked (GlcNAc...) asparagine glycosylation. One can recognise an EGF-like 36; calcium-binding domain in the interval 2164–2205 (DVNECLESPGICSNGQCINTDGSFRCECPMGYNLDYTGVRCV). 15 disulfide bridges follow: Cys2168–Cys2180, Cys2175–Cys2189, Cys2191–Cys2204, Cys2210–Cys2221, Cys2216–Cys2230, Cys2232–Cys2244, Cys2250–Cys2261, Cys2257–Cys2270, Cys2272–Cys2285, Cys2291–Cys2305, Cys2298–Cys2314, Cys2316–Cys2329, Cys2335–Cys2347, Cys2342–Cys2356, and Cys2358–Cys2371. Ser2186 carries an O-linked (Glc) serine glycan. The 40-residue stretch at 2206–2245 (DTDECSIGNPCGNGTCTNVIGSFECTCNEGFEPGPMMNCE) folds into the EGF-like 37; calcium-binding domain. The N-linked (GlcNAc...) asparagine glycan is linked to Asn2218. The EGF-like 38; calcium-binding domain maps to 2246–2286 (DINECAQNPLLCAFRCMNTFGSYECTCPVGYALREDQKMCK). A glycan (O-linked (Glc) serine) is linked at Ser2267. Residues 2287–2330 (DLDECAEGLHDCESRGMMCKNLIGTFMCICPPGMARRPDGEGCV) enclose the EGF-like 39; calcium-binding domain. An EGF-like 40; calcium-binding domain is found at 2331–2372 (DENECRTKPGICENGRCVNIIGSYRCECNEGFQSSSSGTECL). A glycan (O-linked (Glc) serine) is linked at Ser2353. One can recognise a TB 9 domain in the interval 2377-2430 (GLCFAEVLQTMCQMASSSRNLVTKSECCCDGGRGWGHQCELCPLPGTAQYKKIC). The EGF-like 41; calcium-binding domain occupies 2442-2483 (DIDECKVMPSLCTNGQCVNTMGSFRCFCKVGYTTDISGTACV). 21 cysteine pairs are disulfide-bonded: Cys2446/Cys2458, Cys2453/Cys2467, Cys2469/Cys2482, Cys2488/Cys2499, Cys2495/Cys2508, Cys2510/Cys2523, Cys2529/Cys2540, Cys2536/Cys2549, Cys2551/Cys2562, Cys2568/Cys2581, Cys2575/Cys2590, Cys2592/Cys2605, Cys2611/Cys2621, Cys2617/Cys2630, Cys2632/Cys2645, Cys2651/Cys2662, Cys2657/Cys2671, Cys2673/Cys2686, Cys2692/Cys2703, Cys2699/Cys2712, and Cys2714/Cys2726. A glycan (O-linked (Glc) serine) is linked at Ser2464. The 41-residue stretch at 2484–2524 (DLDECSQSPKPCNFICKNTKGSYQCSCPRGYVLQEDGKTCK) folds into the EGF-like 42; calcium-binding domain. Residue Ser2505 is glycosylated (O-linked (Glc) serine). The EGF-like 43; calcium-binding domain maps to 2525-2563 (DLDECQTKQHNCQFLCVNTLGGFTCKCPPGFTQHHTACI). The region spanning 2564-2606 (DNNECGSQPSLCGAKGICQNTPGSFSCECQRGFSLDASGLNCE) is the EGF-like 44; calcium-binding domain. Ser2587 is a glycosylation site (O-linked (Glc) serine). Residues 2607-2646 (DVDECDGNHRCQHGCQNILGGYRCGCPQGYVQHYQWNQCV) form the EGF-like 45; calcium-binding domain. The 41-residue stretch at 2647 to 2687 (DENECSNPGACGSASCYNTLGSYKCACPSGFSFDQFSSACH) folds into the EGF-like 46; calcium-binding domain. O-linked (Glc) serine glycosylation occurs at Ser2668. Residues 2688 to 2727 (DVNECSSSKNPCSYGCSNTEGGYLCGCPPGYFRVGQGHCV) enclose the EGF-like 47; calcium-binding domain. Asn2803 carries an N-linked (GlcNAc...) asparagine glycan.

It belongs to the fibrillin family. Interacts with BMP2, BMP4, BMP7, BMP10 and GDF5. Interacts with MFAP2 and MFAP5. Interacts with ADAMTSL5. Interacts with MFAP4. N-glycosylated. Post-translationally, O-glycosylated on serine residues by POGLUT2 and POGLUT3. Widely expressed.

It is found in the secreted. The protein localises to the extracellular space. The protein resides in the extracellular matrix. Fibrillins are structural components of 10-12 nm extracellular calcium-binding microfibrils, which occur either in association with elastin or in elastin-free bundles. Fibrillin-2-containing microfibrils regulate the early process of elastic fiber assembly. Regulates osteoblast maturation by controlling TGF-beta bioavailability and calibrating TGF-beta and BMP levels, respectively. Its function is as follows. Hormone secreted by trophoblasts that promotes trophoblast invasiveness. Has glucogenic activity: is able to increase plasma glucose levels. This chain is Fibrillin-2, found in Mus musculus (Mouse).